Consider the following 367-residue polypeptide: Probable 7-methylxanthine methyltransferase 2 (367 aa).

Tyr-20 is an S-adenosyl-L-homocysteine binding site. Residue Thr-27 participates in theobromine binding. Residues Cys-64, Gln-69, Asp-101, Leu-102, Ser-134, and Phe-135 each coordinate S-adenosyl-L-homocysteine. Theobromine-binding residues include Tyr-152, His-155, and Trp-156. Positions 172, 258, 260, and 261 each coordinate Mg(2+). Phe-313 is a theobromine binding site.

It belongs to the methyltransferase superfamily. Type-7 methyltransferase family. It depends on Mg(2+) as a cofactor.

It catalyses the reaction 7-methylxanthine + S-adenosyl-L-methionine = theobromine + S-adenosyl-L-homocysteine + H(+). Its pathway is alkaloid biosynthesis. In terms of biological role, involved in the biosynthesis of theobromine. This Theobroma cacao (Cacao) protein is Probable 7-methylxanthine methyltransferase 2.